The chain runs to 260 residues: MVLIRVLANLLILQLSYAQKSSELVIGGVECDINEHRFLAAFFKYQPWTFQCAGTLIHEQWVLGAAHCYKRGLNIYLGMHNQSIQFDDEQRRYAIEEHYYRCDEKLTKWEKDVMLLKLNKPVRNSTHIAPLSLPSSPPSIGSFCRVMGWGIMSSTKDILPDVPHCANIKLVNYTECVAPYPNIPVTTRLWCAGVLEGGIDTCHQDSGGPLICDGQFQGIVAFGRYPCAQPRVPALYTKVSNYTDWIQNIIAGKTTTACPP.

A signal peptide spans 1 to 18 (MVLIRVLANLLILQLSYA). A propeptide spanning residues 19 to 24 (QKSSEL) is cleaved from the precursor. In terms of domain architecture, Peptidase S1 spans 25-251 (VIGGVECDIN…YTDWIQNIIA (227 aa)). 6 disulfides stabilise this stretch: Cys31/Cys165, Cys52/Cys68, Cys102/Cys258, Cys144/Cys212, Cys176/Cys191, and Cys202/Cys227. His67 functions as the Charge relay system in the catalytic mechanism. Residue Asn81 is glycosylated (N-linked (GlcNAc...) asparagine). Catalysis depends on Asp112, which acts as the Charge relay system. 2 N-linked (GlcNAc...) asparagine glycosylation sites follow: Asn124 and Asn172. Ser206 (charge relay system) is an active-site residue. N-linked (GlcNAc...) asparagine glycosylation is present at Asn241.

It belongs to the peptidase S1 family. Snake venom subfamily. Monomer. As to expression, expressed by the venom gland.

The protein localises to the secreted. In terms of biological role, snake venom serine protease that may act in the hemostasis system of the prey. The polypeptide is Snake venom serine protease Dav-X (Deinagkistrodon acutus (Hundred-pace snake)).